A 133-amino-acid polypeptide reads, in one-letter code: MRSLGHQIVADFYHCDGSTLSDVDFVTDAMLEAARRANCTIVTQTFHHFSPYGVSGAVIVAESHLAIHTWPEYGYAAVDVFTCGDIIQPEDALNYLKEAFGAGQVSTMEMKRGQVDMMGVPAHELRVKPALCA.

Ser63 (schiff-base intermediate with substrate; via pyruvic acid) is an active-site residue. Position 63 is a pyruvic acid (Ser); by autocatalysis (Ser63). Residue His68 is the Proton acceptor; for processing activity of the active site. The active-site Proton donor; for catalytic activity is the Cys83.

It belongs to the prokaryotic AdoMetDC family. Type 1 subfamily. In terms of assembly, heterotetramer of two alpha and two beta chains arranged as a dimer of alpha/beta heterodimers. Pyruvate serves as cofactor. In terms of processing, is synthesized initially as an inactive proenzyme. Formation of the active enzyme involves a self-maturation process in which the active site pyruvoyl group is generated from an internal serine residue via an autocatalytic post-translational modification. Two non-identical subunits are generated from the proenzyme in this reaction, and the pyruvate is formed at the N-terminus of the alpha chain, which is derived from the carboxyl end of the proenzyme. The post-translation cleavage follows an unusual pathway, termed non-hydrolytic serinolysis, in which the side chain hydroxyl group of the serine supplies its oxygen atom to form the C-terminus of the beta chain, while the remainder of the serine residue undergoes an oxidative deamination to produce ammonia and the pyruvoyl group blocking the N-terminus of the alpha chain.

The catalysed reaction is S-adenosyl-L-methionine + H(+) = S-adenosyl 3-(methylsulfanyl)propylamine + CO2. Its pathway is amine and polyamine biosynthesis; S-adenosylmethioninamine biosynthesis; S-adenosylmethioninamine from S-adenosyl-L-methionine: step 1/1. Functionally, catalyzes the decarboxylation of S-adenosylmethionine to S-adenosylmethioninamine (dcAdoMet), the propylamine donor required for the synthesis of the polyamines spermine and spermidine from the diamine putrescine. The sequence is that of S-adenosylmethionine decarboxylase proenzyme from Acidithiobacillus ferrooxidans (strain ATCC 23270 / DSM 14882 / CIP 104768 / NCIMB 8455) (Ferrobacillus ferrooxidans (strain ATCC 23270)).